The sequence spans 1342 residues: MVYSYTEKKRIRKDFGKRPQVLDIPYLLSIQLDSFQKFIEQDPEGQYGLEAAFRSVFPIKSYSGNSELQYVSYRLGEPVFDVQECQIRGVTYSAPLRVKLRLVVYEREAPEGTVKDIKEQEVYMGEIPLMTDNGTFVINGTERVIVSQLHRSPGVFFDSDKGKTHSSGKVLYNARIIPYRGSWLDFEFDPKDNLFVRIDRRRKLPATIILRALQYTTEQILDLFFEKVIFEIRDNKLQMELLPERLRGETASFDIEFDGKVYVEKGRRITARHIRQLEKDDIKLIEVPVEYIAGKVAAKDYVDASTGELICPANMELSLDLLAKLSQSGHKRIETLFTNDLDHGAYMSETIRVDPTSDRLSALVEIYRMMRPGEPPTREAAENLFENLFFSEDRYDLSAVGRMKFNRSLLRDAIEGSGILSKEDIIEVMKKLIDIRNGKGEVDDIDHLGNRRIRSVGEMAENQFRVGLVRVERAVKERLSLGDLDTLMPQDMINAKPISAAVKEFFGSSQLSQFMDQNNPLSEITHKRRISALGPGGLTRERAGFEVRDVHPTHYGRVCPIETPEGPNIGLINSLSVYAQTNEYGFLETPYRKVTDGVVTDEIHYLSAIEEGNYVIAQANTNLDEEGRFVDDLVTCRSKGESSLFSNDQVDYMDVSTQQIVSVGASLIPFLEHDDANRALMGANMQRQAVPTLRADKPLVGTGMERAVAVDSGVTAVAKRGGTVQYVDASRIVIKVNEDEMYPGEAGIDIYNLTKYTRSNQNTCINQMPCVSLGEPVERGDVLADGPSTDLGELALGQNMRVAFMPWNGYNFEDSILVSERVVQEDRFTTIHIQELACVSRDTKLGPEEITADIPNVGEAALSKLDESGIVYIGAEVTGGDILVGKVTPKGETQLTPEEKLLRAIFGEKASDVKDSSLRVPNGVSGTIIDVQVFTRDGVEKDKRALEIEEMQLKQAKKDLSEELQILEAGLFSRIYAVLVSGGVEAEKLDKLPRDRWLELGLTDEEKQNQLEQLAEQYDELKHEFEKKLEAKRRKITQGDDLAPGVLKIVKVYLAVKRQIQPGDKMAGRHGNKGVISKINPIEDMPHDANGTPVDIVLNPLGVPSRMNIGQILETHLGMAAKGIGEKINAMLKQQEEVAKLREFIQRAYDLGTDVRQKVDLNTFSDDEVLRLAENLKKGMPIATPVFDGAKESEIKELLQLGGLPTSGQITLFDGRTGEQFERQVTVGYMYMLKLNHLVDDKMHARSTGSYSLVTQQPLGGKAQFGGQRFGEMEVWALEAYGAAYTLQEMLTVKSDDVNGRTKMYKNIVDGNHQMEPGMPESFNVLLKEIRSLGINIELEDE.

The protein belongs to the RNA polymerase beta chain family. In terms of assembly, the RNAP catalytic core consists of 2 alpha, 1 beta, 1 beta' and 1 omega subunit. When a sigma factor is associated with the core the holoenzyme is formed, which can initiate transcription.

The enzyme catalyses RNA(n) + a ribonucleoside 5'-triphosphate = RNA(n+1) + diphosphate. In terms of biological role, DNA-dependent RNA polymerase catalyzes the transcription of DNA into RNA using the four ribonucleoside triphosphates as substrates. In Enterobacter sp. (strain 638), this protein is DNA-directed RNA polymerase subunit beta.